The chain runs to 505 residues: Maturase K (505 aa).

It belongs to the intron maturase 2 family. MatK subfamily.

It is found in the plastid. Its subcellular location is the chloroplast. Its function is as follows. Usually encoded in the trnK tRNA gene intron. Probably assists in splicing its own and other chloroplast group II introns. In Nuphar variegata (Yellow pond lily), this protein is Maturase K.